The chain runs to 218 residues: uncharacterized protein (218 aa).

Positions 1 to 67 are disordered; it reads MARITNMGKR…KKKRSEYRRL (67 aa). A compositionally biased stretch (low complexity) spans 29–39; the sequence is NSSNTNEESSS. The span at 40–49 shows a compositional bias: polar residues; sequence QDNMKASFGS. Over residues 58-67 the composition is skewed to basic residues; sequence KKKRSEYRRL. 3 consecutive CCHC-type zinc fingers follow at residues 77 to 94, 100 to 117, and 124 to 141; these read KFCF…DCPE, SICF…ACSK, and AKCF…QCEQ. Residues 152-168 form a CCHC-type 4; atypical zinc finger; the sequence is CCKFCSSVHHLAKDCDQ.

This is an uncharacterized protein from Schizosaccharomyces pombe (strain 972 / ATCC 24843) (Fission yeast).